The primary structure comprises 318 residues: Ribosomal RNA small subunit methyltransferase H (318 aa).

S-adenosyl-L-methionine contacts are provided by residues 37–39 (GGH), D57, F83, D104, and Q111.

Belongs to the methyltransferase superfamily. RsmH family.

The protein resides in the cytoplasm. It catalyses the reaction cytidine(1402) in 16S rRNA + S-adenosyl-L-methionine = N(4)-methylcytidine(1402) in 16S rRNA + S-adenosyl-L-homocysteine + H(+). Its function is as follows. Specifically methylates the N4 position of cytidine in position 1402 (C1402) of 16S rRNA. This Neisseria gonorrhoeae (strain ATCC 700825 / FA 1090) protein is Ribosomal RNA small subunit methyltransferase H.